Reading from the N-terminus, the 622-residue chain is Mitochondrial distribution and morphology protein 34 (622 aa).

The SMP-LTD domain occupies 1-204 (MSFKVNWNSL…LPTLIHQLSL (204 aa)). Disordered regions lie at residues 364–393 (YSNK…DNTV), 442–468 (LETM…RAYQ), and 572–592 (LDGG…NFRP). Over residues 372–385 (KPKRRRIKVHKKSK) the composition is skewed to basic residues. Residues 446–455 (STGSSSSASS) show a composition bias toward low complexity. The segment covering 577-587 (NSANTNNSSGG) has biased composition (polar residues).

Belongs to the MDM34 family. In terms of assembly, component of the ER-mitochondria encounter structure (ERMES) or MDM complex, composed of MMM1, MDM10, MDM12 and MDM34.

The protein localises to the mitochondrion outer membrane. In terms of biological role, component of the ERMES/MDM complex, which serves as a molecular tether to connect the endoplasmic reticulum (ER) and mitochondria. Components of this complex are involved in the control of mitochondrial shape and protein biogenesis, and function in nonvesicular lipid trafficking between the ER and mitochondria. MDM34 is required for the interaction of the ER-resident membrane protein MMM1 and the outer mitochondrial membrane-resident beta-barrel protein MDM10. This Candida albicans (strain WO-1) (Yeast) protein is Mitochondrial distribution and morphology protein 34.